The sequence spans 287 residues: Bifunctional protein FolD (287 aa).

NADP(+)-binding positions include 160–162, Ser189, and Thr230; that span reads GRS.

The protein belongs to the tetrahydrofolate dehydrogenase/cyclohydrolase family. Homodimer.

The enzyme catalyses (6R)-5,10-methylene-5,6,7,8-tetrahydrofolate + NADP(+) = (6R)-5,10-methenyltetrahydrofolate + NADPH. It carries out the reaction (6R)-5,10-methenyltetrahydrofolate + H2O = (6R)-10-formyltetrahydrofolate + H(+). It participates in one-carbon metabolism; tetrahydrofolate interconversion. In terms of biological role, catalyzes the oxidation of 5,10-methylenetetrahydrofolate to 5,10-methenyltetrahydrofolate and then the hydrolysis of 5,10-methenyltetrahydrofolate to 10-formyltetrahydrofolate. The sequence is that of Bifunctional protein FolD from Chlamydia abortus (strain DSM 27085 / S26/3) (Chlamydophila abortus).